The following is a 132-amino-acid chain: Agouti-signaling protein (132 aa).

An N-terminal signal peptide occupies residues 1-22 (MDVTRLLLATLLVFLCFFTAYS). Residue Asn39 is glycosylated (N-linked (GlcNAc...) asparagine). The interval 57–88 (KKSKQTSRKEAEKKRSSKKEASMKKVARPRTP) is disordered. Over residues 63–79 (SRKEAEKKRSSKKEASM) the composition is skewed to basic and acidic residues. Cystine bridges form between Cys93–Cys108, Cys100–Cys114, Cys107–Cys125, Cys111–Cys132, and Cys116–Cys123. An Agouti domain is found at 93–132 (CVATRDSCKPPAPACCDPCASCQCRFFRSACSCRVLSLNC).

It is found in the secreted. In terms of biological role, involved in the regulation of melanogenesis. The binding of ASP to MC1R precludes alpha-MSH initiated signaling and thus blocks production of cAMP, leading to a down-regulation of eumelanogenesis (brown/black pigment) and thus increasing synthesis of pheomelanin (yellow/red pigment). This is Agouti-signaling protein (ASIP) from Macaca assamensis (Assam macaque).